The following is an 819-amino-acid chain: Myosin light chain kinase 3 (819 aa).

The disordered stretch occupies residues 146-460 (VPWRRGSPGD…PGVGNPEPEQ (315 aa)). Serine 152 bears the Phosphoserine mark. 2 stretches are compositionally biased toward basic and acidic residues: residues 158 to 170 (EENK…EGAK) and 183 to 196 (DARE…KADV). The segment covering 307–318 (GPGPQCPGPPGL) has biased composition (pro residues). Phosphoserine occurs at positions 355, 401, and 408. The 256-residue stretch at 515-770 (VCQHEVLGGG…ATQCLKHEWL (256 aa)) folds into the Protein kinase domain. ATP is bound by residues 521-529 (LGGGRFGQV) and lysine 544. Aspartate 636 (proton acceptor) is an active-site residue.

The protein belongs to the protein kinase superfamily. CAMK Ser/Thr protein kinase family. Mg(2+) serves as cofactor. Post-translationally, phosphorylated on serine residues.

Its subcellular location is the cytoplasm. The catalysed reaction is L-seryl-[myosin light chain] + ATP = O-phospho-L-seryl-[myosin light chain] + ADP + H(+). It carries out the reaction L-threonyl-[myosin light chain] + ATP = O-phospho-L-threonyl-[myosin light chain] + ADP + H(+). Kinase that phosphorylates MYL2 in vitro. Promotes sarcomere formation in cardiomyocytes and increases cardiomyocyte contractility. The polypeptide is Myosin light chain kinase 3 (MYLK3) (Pongo abelii (Sumatran orangutan)).